The chain runs to 437 residues: Trigger factor (437 aa).

The region spanning 163 to 248 (GDRVIIDFEG…LNNVSEPTLP (86 aa)) is the PPIase FKBP-type domain.

It belongs to the FKBP-type PPIase family. Tig subfamily.

Its subcellular location is the cytoplasm. It catalyses the reaction [protein]-peptidylproline (omega=180) = [protein]-peptidylproline (omega=0). Involved in protein export. Acts as a chaperone by maintaining the newly synthesized protein in an open conformation. Functions as a peptidyl-prolyl cis-trans isomerase. In Neisseria gonorrhoeae (strain NCCP11945), this protein is Trigger factor.